A 333-amino-acid chain; its full sequence is Low specificity L-threonine aldolase (333 aa).

Lys197 is modified (N6-(pyridoxal phosphate)lysine).

It belongs to the threonine aldolase family. Homotetramer. Pyridoxal 5'-phosphate is required as a cofactor.

It catalyses the reaction L-threonine = acetaldehyde + glycine. It carries out the reaction L-allo-threonine = acetaldehyde + glycine. Catalyzes the cleavage of L-allo-threonine and L-threonine to glycine and acetaldehyde. L-threo-phenylserine and L-erythro-phenylserine are also good substrates. This chain is Low specificity L-threonine aldolase (ltaE), found in Escherichia coli (strain K12).